Reading from the N-terminus, the 353-residue chain is Dihydroorotate dehydrogenase (quinone) (353 aa).

Residues 66-70 and Thr90 contribute to the FMN site; that span reads AGFDK. Lys70 is a binding site for substrate. Residue 115–119 coordinates substrate; the sequence is NRMGF. 2 residues coordinate FMN: Asn143 and Asn176. Residue Asn176 coordinates substrate. Ser179 serves as the catalytic Nucleophile. Asn181 provides a ligand contact to substrate. Lys212 and Thr240 together coordinate FMN. A substrate-binding site is contributed by 241–242; it reads NT. FMN-binding positions include Gly264, Gly293, and 314 to 315; that span reads YT.

The protein belongs to the dihydroorotate dehydrogenase family. Type 2 subfamily. Monomer. FMN is required as a cofactor.

Its subcellular location is the cell membrane. The enzyme catalyses (S)-dihydroorotate + a quinone = orotate + a quinol. The protein operates within pyrimidine metabolism; UMP biosynthesis via de novo pathway; orotate from (S)-dihydroorotate (quinone route): step 1/1. Functionally, catalyzes the conversion of dihydroorotate to orotate with quinone as electron acceptor. The sequence is that of Dihydroorotate dehydrogenase (quinone) from Mycolicibacterium gilvum (strain PYR-GCK) (Mycobacterium gilvum (strain PYR-GCK)).